The sequence spans 336 residues: Iron(3+)-hydroxamate import system permease protein FhuG (336 aa).

9 helical membrane passes run 9 to 29 (LIVM…SLNL), 63 to 83 (IILS…LQSV), 91 to 111 (PGIL…IYFF), 124 to 144 (FMLP…IYIL), 155 to 175 (LILV…IFQL), 193 to 213 (IWGA…ILLL), 245 to 265 (ILLL…GGIA), 285 to 305 (TLIP…DTLA), and 313 to 333 (EIPV…YLLM).

It belongs to the binding-protein-dependent transport system permease family. FecCD subfamily. The complex is composed of an ATP-binding protein (FhuC), two transmembrane proteins (FhuB and FhuG) and a solute-binding protein (FhuD or YxeB).

It localises to the cell membrane. Functionally, part of the ABC transporter complex FhuBGCD involved in iron(3+)-hydroxamate import. Responsible for the translocation of the substrate across the membrane. The sequence is that of Iron(3+)-hydroxamate import system permease protein FhuG (fhuG) from Bacillus subtilis (strain 168).